The primary structure comprises 7071 residues: MESLVLGINEKTHVQLSLPVLQVRDVLVRGFGDSVEEALSEAREHLKSGTCGIVELEKGVLPQPEQPYVFIKRSDAQGTDHGHRVRELVAELDGVQYGRSGITLGVLVPHVGETPIAYRNVLLRKNGNKGAGGHSFGIDLKSYDLGDELGTDPIEDYEQNWNTKHGSGVLRELTRELNGGALTRYVDNNFCGPDGYPLECIKDLLARAGKSMCTLSEQLDYIESKRGVYCCRDHGHEIAWFTERSDKSYEHQTPFEIKSAKKFDTFKGECPKFVFPLNSKVKVIQPRVEKKKTEGFMGRIRSVYPVATPQECNNMHLSTLMKCNHCDEVSWQTCDFLKATCEQCGTENLVSEGPNTCGYLPTNAVVKMPCPACQDPEIGPEHSAADYHNHSNIETRLRKGGRTRCFGGCVFAYVGCYNKRAYWVPRASADIGSGHTGITGDNVETLNEDLLEILSRERVNINIVGDFQLNEEVAIILASFSASTSAFIDTIKSLDYKSFKTIVESCGNYKVTKGKPIKGAWNIGQHRSVLTPLCGFPSQAAGVIRSIFSRTLDAANHSIPDLQRAAVTILDSISEQSLRLVDAMVYTSNLLTNSVIIMAYVTGGLVQQTSQWLSNLLDTTVEKLRPIFAWIEAKLSAGVEFLKDAWEILKFLITGVFDIVKGQIQVASDNIKDCVKCFVDVVNKALEMCIDQVTIAGAKLRSLNLGEVFIAQSKGLYRQCIRGKEQLQLLMPLKAPKEVTFLEGDSHDTVLTSEEVVLKNGELEALETPVDSFTNGAVVGTPVCINGLMLLEIKANEQYCALSPGLLATNNVFRLKGGAPTKGVTFGEDTVVEVQGYKNVRITFELDERVDKVLNEKCSVYTVESGTEVTEFACVVAEAVVKTLQPVSDLLTNMGIDLDEWSVATFYLFDDSGEEKLSSRMYCSFYPPDEEEDCEEYEEEEEVSERTCEHEYGTEEDYKGLPLEFGASTDIIQVEEQEEEDWLDDAVEAEPEPEPLHEEPVNQLTGYLKLTDNVAIKCVDIVEEAQNANPMVIVNAANIHLKHGGGVAGALNKATNGAMQKESDHYIKLNGPLTVGGSCLLSGHNLAKKCLHVVGPNLNAGEDIQLLKAAYENFNSQDILLAPLLSAGIFGAKPLQSLQMCVQTVRTQVYIVVNDKVLYEQVVMDYLDSLKPKVEAPKQEVLPKAEYPKVDEKSVVQKTIDVKPKIKACIDEVTTTLEETKFLTNKLLLFTDINGKLYQDSKNMLRGEDMSFLEKDAPYMVGDVITSGDITCVVIPSKKAGGTTEMLSRALKKVPINEYITTYPGQGCAGYTLEEAKTALKKCKSAFYVLPSETPNAKEEILGTVSWNLREMLAHAEETRKLMPVCMDVRAIMATIQRKYKGIKIQEGIVDYGVRFFFYTSKEPVASIITKLNSLNEPLVTMPIGYVTHGFNLEEAARCMRSLKAPAIVSVSSPDAVTTYNGYLTSSSKTSEDHFVETVSLAGSYRDWSYSGQRTELGVEFLKRGEKIVYHTLESPVKFHLDGEVLPLDKLKSLLSLREVKTIKVFTTVDNTNLHTQLVDMSMTYGQQLGPTYLEGADVTKIKPHVNHEGKTFFVLPSDDTLRSEAFEYYHTLDESFLGRYMSALNHTKKWKFPQVGGLTSIKWADNNCYLSSVLLALQQIEVKFNAPALQEAYYRARAGDAANFCALILAYSNKTVGELGDVRETMTHLLQHANLESAKRVLNVVCKHCGQKTTTLTGVEAVMYMGTLSYDNLKMGVSIPCVCGRDATQYLVQQESSFVMMSAPPAEYKLQQGTFLCANEYTGNYQCGHYTHITAKETLYRIDGAHLTKMSEYKGPVTDVFYKETSYTTTIKPVSYKLDGVTYTEIEPKLDGYYKKDNAYYTEQPIDLIPTQPLPNASFDNFKLTCSNTKFADDLNQMTGFTKPASRELSVTFFPDLNGDVVAIDYRHYSASFKKGAKLLHKPIVWHINQATTKTTFKPNTWCLRCLWSTKPVDTSNSFEVLAVEDTQGMDNLACESQQPTPEEVVENPTIQKEVIECDVKTTEVVGNVILKPSDEGVKVTQELDHEDLMAAYVENTSITIKKPNELSLALGLKTIATHGIAAINSVPWGKILAYVKPFLGQAAVTTSNCAKRLVQRMFNNYMPYVLTLLFQLCTFTKSTNSRIRASLPTTIAKNSVRGIVRLCLDAGINYVKSPKFSKLFTIAMWLLLLSICLGSLIYVTAALGVLLSNFGAPSYCSGVRESYLNSSNVTTMDFCEGSFPCSVCLSGLDSLDSYPALETIQVTISSYKLDLTILGLAAEWFFAYMLFTKFFYLLGLSAIMQVFFGYFASHFISNSWLMWFIISIVQMAPVSAMVRMYIFFASFYYIWKSYVHIMDGCTSSTCMMCYKRNRATRVECTTIVNGMKRSFYVYANGGRGFCKTHNWNCLNCDTFCAGSTFISDEVARDLSLQFKRPINPTDQSSYVVDSVAVKNGALHLYFDKAGQKTYERHPLSHFVNLDNLRANNTKGSLPINVIVFDGKSKCDESAAKSASVYYSQLMCQPILLLDQALVSDVGDSTEVSVKMFDAYVDTFSATFSVPMEKLKALVATAHSELAKGVALDGVLSTFVSASRQGVVDTDVDTKDVIECLKLSHHSDLEVTGDSCNNFMLTYNKVENMTPRDLGACIDCNARHINAQVARSHNVSLIWNVKDYMSLSEQLRKQIRSAAKKNNIPFRLTCATTRQVVNVITTKISLKGGKIVSTWFKIMLKATLLCVLAALVCYIVMPVHILSVHGGYTNEIIGYKAIQDGVTRDIVSTDDCFANKHAGFDSWFSQRGGSYKNDKSCPVVAAIITREIGFIVPGLPGTVLRAINGDFLHFLPRVFSAVGNICYTPSKLIEYSDFSTSACVLAAECTIFKDAMGKPVPYCYDTNLLEGSISYSELRPDTRYVLMDGSIIQFPNAYLEGSVRVVTTFDAEYCRHGTCERSEAGICLSTSGRWVLNNEHYRALPGVFCGVDAMNLIANIFTPLVQPVGALDVSASVVAGGIIAILVTCAAYYFMKFRRAFGEYNHVVAANAPLFLMSFTILCLAPAYSFLPGVYSVFYLYLTFYFTNDVSFLAHLQWFAMFSPIVPFWITAIYVFCISLKHFHWFFNNYLRKRVVFNGVTFSTFEEAALCTFLLNKEMYLKLRSETLLPLTQYNRYLALYNKYKYFSGALDTTSYREAACCHLAKALNDFSNSGADVLYQPPQTSITSAVLQSGFRKMAFPSGKVEGCMVQVTCGTTTLNGLWLDDTVYCPRHVICTAEDMLNPNYEDLLIRKSNHSFLVQAGNVQLRVIGHSMQNCLLRLKVDTSNPKTPKYKFVRIQPGQTFSVLACYNGSPSGVYQCAMRPNHTIKGSFLNGSCGSVGFNIDYDCVSFCYMHHMELPTEVHAGTDLEGKFYGPFVDRQTAQAAGTDTTITLNVLAWLYAAVINGDRWFLNRFTTTLNDFNLVAMKYNYEPLTQDHVDILGPLSAQTGIAVLDMCAALKELLQNGMNGRTILGSTILEDEFTPFDVVRQCSGVTFQGKFKRIVKGTHHWMLLTFLTSLLILVQSTQWSLFFFVYENAFLPFTLGIMAVAACAMLLVKHKHAFLCLFLLPSLATVAYFNMVYMPASWVMRIMTWLELADTSLSGYRLKDCVMYASALVLLVLMTARTVYDDAARRVWTLMNVITLVYKVYYGNALDQAISMWALVISVTSNYSGVVTTIMFLARAIVFVCVEYYPLLFITGNTLQCIMLVYCFLGYCCCCYFGLFCLLNRYFRLTLGVYDYLVSTQEFRYMNSQGLLPPKSSIDAFKLNIKLLGIGGKPCIKVATVQSKMSDVKCTSVVLLSVLQQLRVESSSKLWAQCVQLHNDILLAKDTTEAFEKMVSLLSVLLSMQGAVDINKLCEEMLDNRATLQAIASEFSSLPSYAAYATAQEAYEQAVANGDSEVVLKKLKKSLNVAKSEFDRNAAMQRKLEKMADQAMTQMYKQARSEDKRAKVTSAMQTMLFTMLRKLDNDALNNIINNARDGCVPLNIIPLTTAAKLMVVVPDYGTYKNTCDGNTFTYASALWEIQQVVDADSKIVQLSEINMENSSNLAWPLIVTALRANSAVKLQNNELSPVALRQMSCAAGTTQTACTDDNALAYYNNSKGGRFVLALLSDHQDLKWARFPKSDGTGTIYTELEPPCRFVTDTPKGPKVKYLHFIKGLNNLNRGMVLGSLAATVRLQAGNATEVPANSTVLSFCAFAVDPAKAYKDYLASGGQPITNCVKMLCTHTGTGQAITVTPEANMDQESFGGASCCLYCRCHIDHPNPKGFCDLKGKYVQIPTTCANDPVGFTLRNTVCTVCGMWKGYGCSCDQLREPMMQSADASTFLNRVCGVSAARLTPCGTGISTDVVYRAFDIYNEKVAGFAKFLKTNCCRFQEKDEEGNLLDSYFVVKRHTMSNYQHEETIYNLVKDCPAVAVHDFFKFRVDGDMVPHISRQRLTKYTMADLVYALRHFDEGNCDTLKEILVTYNCCDDDYFNKKDWYDFVENPDILRVYANLGERVRQALLKTVQFCDAMRDAGIVGVLTLDNQDLNGNWYDFGDFVQVAPGCGVPIVDSYYSLLMPILTLTRALAAESHMDADLAKPLIKWDLLKYDFTAERLCLFDRYFKYWDQTYHPNCINCLDDRCILHCANFNVLFSTVFPPTSFGPLVRKIFVDGVPFVVSTGYHFRELGVVHNQDVNLHSSRLSFKELLVYAADPAMHAASGNLLLDKRTTCFSVAALTNNVAFQTVKPGNFNKDFYDFAVSKGFFKEGSSVELKHFFFAQDGNAAISDYDYYRYNLPTMCDIRQLLFVVEVVDKYFDCYDGGCINANQVIVNNLDKSAGFPFNKWGKARLYYDSMSYEDQDALFAYTKRNVIPTITQMNLKYAISAKNRARTVAGVSICSTMTNRQFHQKLLKSIAATRGATVVIGTSKFYGGWHNMLKTVYSDVETPHLMGWDYPKCDRAMPNMLRIMASLVLARKHSTCCNLSHRFYRLANECAQVLSEMVMCGGSLYVKPGGTSSGDATTAYANSVFNICQAVTANVNALLSTDGNKIADKYVRNLQHRLYECLYRNRDVDHEFVGEFYAYLRKHFSMMILSDDAVVCYNSNYAAQGLVASIKNFKAVLYYQNNVFMSEAKCWTETDLTKGPHEFCSQHTMLVKQGDDYVYLPYPDPSRILGAGCFVDDIVKTDGTLMIERFVSLAIDAYPLTKHPNQEYADVFHLYLQYIRKLHDELTGHMLDMYSVMLTNDNTSRYWEPEFYEAMYTPHTVLQAVGACVLCNSQTSLRCGACIRRPFLCCKCCYDHVISTSHKLVLSVNPYVCNAPGCDVTDVTQLYLGGMSYYCKSHKPPISFPLCANGQVFGLYKNTCVGSDNVTDFNAIATCDWTNAGDYILANTCTERLKLFAAETLKATEETFKLSYGIATVREVLSDRELHLSWEVGKPRPPLNRNYVFTGYRVTKNSKVQIGEYTFEKGDYGDAVVYRGTTTYKLNIGDYFVLTSHTVMPLSAPTLVPQEHYVRITGLYPTLNISDEFSSNVANYQKVGMQKYSTLQGPPGTGKSHFAIGLALYYPSARIVYTACSHAAVDALCEKALKYLPIDKCSRIIPARARVECFDKFKVNSTLEQYVFCTVNALPETTADIVVFDEISMATNYDLSVVNARLRAKHYVYIGDPAQLPAPRTLLTKGTLEPEYFNSVCRLMKTIGPDMFLGTCRRCPAEIVDTVSALVYDNKLKAHKEKSAQCFKMFYKGVITHDVSSAINRPQIGVVREFLTRNPAWRKAVFISPYNSQNAVASKILGLPTQTVDSSQGSEYDYVIFTQTTETAHSCNVNRFNVAITRAKIGILCIMSDRDLYDKLQFTSLEVPRRNVATLQAENVTGLFKDCSKIITGLHPTQAPTHLSVDTKFKTEGLCVDIPGIPKDMTYRRLISMMGFKMNYQVNGYPNMFITREEAIRHVRAWIGFDVEGCHATRDAVGTNLPLQLGFSTGVNLVAIPTGYVDTENNTEFTRVNAKPPPGDQFKHLIPLMYKGLPWNVVRIKIVQMLSDTLKGLSDRVVFVLWAHGFELTSMKYFVKIGPERTCCLCDKRATCFSTSSDTYACWNHSVGFDYVYNPFMIDVQQWGFTGNLQSNHDQHCQVHGNAHVASCDAIMTRCLAVHECFVKRVDWSVEYPIIGDELKINSACRKVQHMVVKSALLADKFPVLHDIGNPKAIKCVPQAEVEWKFYDAQPCSDKAYKIEELFYSYATHHDKFTDGVCLFWNCNVDRYPANAIVCRFDTRVLSNLNLPGCDGGSLYVNKHAFHTPAFDKSAFTNLKQLPFFYYSDSPCESHGKQVVSDIDYVPLKSATCITRCNLGGAVCRHHANEYRQYLDAYNMMISAGFSLWIYKQFDTYNLWNTFTRLQSLENVAYNVVNKGHFDGQAGETPVSIINNAVYTKVDGFDVEIFENKTTLPVNVAFELWAKRNIKSVPEIKILNNLGVDIAANTVIWDHKREAPVHMSTIGVCTMTDIAKKPTESACSSLTVLFDGRVEGQVDLFRNARNGVLITEGSVKGLTPSKGPAQASVNGVTLIGESVKTQFNYFKKVDGIIQQLPETYFTQSRDLEDFKPRSQMETDFLELAMDEFIQRYKLEGYAFEHIVYGDFSHGQLGGLHLMIGLAKRSRDSPLKLEDFIPMDSTVKNYFITDAQTGSSKCVCSVIDLLLDDFVEIIKSQDLSVVSKVVKVTIDYAEISFMLWCKDGHVETFYPKLQASQAWQPGVAMPNLYKMQRMLLEKCDLQNYGENAVIPKGIMMNVAKYTQLCQYLNTLTLAVPYNMRVIHFGAGSDKGVAPGTAVLRQWLPTGTLLVDSDLNDFVSDADSTLIGDCATVHTANKWDLIVSDMYDPKAKHVTKENDSKEGFFTYLCGFIKQKLALGGSVAVKITEHSWNADLYKLMGHFSWWTAFVTNVNASSSEAFLIGVNYLGKPKEQIDGYTMHANYIFWRNTNPIQLSSYSLFDMSKFPLKLRGTAVMSLKENQINDMIYSLLEKGRLIIRENNRVVVSSDILVNN.

Residues 12–127 (THVQLSLPVL…YRNVLLRKNG (116 aa)) enclose the CoV Nsp1 globular domain. The region spanning 148 to 179 (ELGTDPIEDYEQNWNTKHGSGVLRELTRELNG) is the BetaCoV Nsp1 C-terminal domain. Residues 183–456 (TRYVDNNFCG…NEDLLEILSR (274 aa)) form the CoV Nsp2 N-terminal domain. The Zn(2+) site is built by cysteine 200, cysteine 231, histidine 234, histidine 236, cysteine 323, cysteine 326, cysteine 341, cysteine 344, cysteine 370, cysteine 373, histidine 382, and cysteine 416. Residues 200-236 (CIKDLLARAGKSMCTLSEQLDYIESKRGVYCCRDHGH) are C2H2. The C4 stretch occupies residues 323 to 344 (CNHCDEVSWQTCDFLKATCEQC). The C2HC stretch occupies residues 370 to 416 (CPACQDPEIGPEHSAADYHNHSNIETRLRKGGRTRCFGGCVFAYVGC). Residues 458 to 688 (RVNINIVGDF…VDVVNKALEM (231 aa)) form the CoV Nsp2 middle domain. Positions 690–818 (IDQVTIAGAK…TNNVFRLKGG (129 aa)) constitute a CoV Nsp2 C-terminal domain. In terms of domain architecture, Ubiquitin-like 1 spans 822-930 (KGVTFGEDTV…MYCSFYPPDE (109 aa)). Macro domains are found at residues 1001-1167 (VNQL…MDYL), 1205-1333 (KIKA…LPSE), and 1341-1468 (ILGT…TSSS). The DPUP domain maps to 1470–1536 (TSEDHFVETV…PLDKLKSLLS (67 aa)). The region spanning 1540–1595 (VKTIKVFTTVDNTNLHTQLVDMSMTYGQQLGPTYLEGADVTKIKPHVNHEGKTFFV) is the Ubiquitin-like 2 domain. The region spanning 1609-1873 (YYHTLDESFL…YTEIEPKLDG (265 aa)) is the Peptidase C16 domain. Cysteine 1649 serves as the catalytic For PL-PRO activity. Zn(2+) contacts are provided by cysteine 1727, cysteine 1730, cysteine 1762, and cysteine 1764. Residues 1727–1764 (CKHCGQKTTTLTGVEAVMYMGTLSYDNLKMGVSIPCVC) form a C4-type zinc finger. Active-site for PL-PRO activity residues include histidine 1810 and aspartate 1824. Positions 1886 to 1996 (PIDLIPTQPL…CLWSTKPVDT (111 aa)) constitute a Nucleic acid-binding domain. Residues 2021-2130 (PTPEEVVENP…LGQAAVTTSN (110 aa)) enclose the G2M domain. Residues 2201–2221 (LFTIAMWLLLLSICLGSLIYV) form a helical membrane-spanning segment. Positions 2201–2369 (LFTIAMWLLL…IFFASFYYIW (169 aa)) are HD1. The region spanning 2222–2292 (TAALGVLLSN…QVTISSYKLD (71 aa)) is the 3Ecto domain. 2 cysteine pairs are disulfide-bonded: cysteine 2238-cysteine 2266 and cysteine 2257-cysteine 2263. 2 helical membrane-spanning segments follow: residues 2312–2334 (FFYL…SHFI) and 2349–2369 (MAPV…YYIW). The interval 2370 to 2460 (KSYVHIMDGC…QFKRPINPTD (91 aa)) is Y1. In terms of domain architecture, CoV Nsp3 Y spans 2370 to 2738 (KSYVHIMDGC…ITTKISLKGG (369 aa)). Zn(2+) is bound by residues histidine 2374, cysteine 2379, cysteine 2384, cysteine 2387, cysteine 2420, histidine 2423, cysteine 2427, and cysteine 2430. The tract at residues 2374–2387 (HIMDGCTSSTCMMC) is ZF1. The tract at residues 2420-2430 (CKTHNWNCLNC) is ZF2. The interval 2461-2555 (QSSYVVDSVA…LLDQALVSDV (95 aa)) is Y2. Residues 2461–2738 (QSSYVVDSVA…ITTKISLKGG (278 aa)) are coV-Y. The interval 2556 to 2637 (GDSTEVSVKM…ECLKLSHHSD (82 aa)) is Y3. A Y4 region spans residues 2638-2738 (LEVTGDSCNN…ITTKISLKGG (101 aa)). A run of 6 helical transmembrane segments spans residues 2753–2773 (LLCV…ILSV), 3020–3040 (ASVV…YYFM), 3059–3079 (LFLM…LPGV), 3081–3101 (SVFY…LAHL), 3103–3123 (WFAM…VFCI), and 3140–3160 (VVFN…TFLL). Residues 2753–3160 (LLCVLAALVC…EEAALCTFLL (408 aa)) form an HD2 region. The region spanning 3140–3238 (VVFNGVTFST…QTSITSAVLQ (99 aa)) is the Nsp4C domain. The Peptidase C30 domain occupies 3239–3544 (SGFRKMAFPS…VRQCSGVTFQ (306 aa)). Active-site for 3CL-PRO activity residues include histidine 3279 and cysteine 3383. 7 helical membrane passes run 3562 to 3582 (FLTS…FFVY), 3584 to 3604 (NAFL…MLLV), 3610 to 3630 (FLCL…MVYM), 3657 to 3676 (CVMY…RTVY), 3683 to 3702 (VWTL…GNAL), 3726 to 3746 (IMFL…LLFI), and 3754 to 3774 (IMLV…LFCL). Residues 3562–3774 (FLTSLLILVQ…CCCYFGLFCL (213 aa)) are HD3. Positions 3835–3917 (SKMSDVKCTS…EMLDNRATLQ (83 aa)) constitute a RdRp Nsp7 cofactor domain. Positions 3918-4115 (AIASEFSSLP…LRANSAVKLQ (198 aa)) constitute a RdRp Nsp8 cofactor domain. The 113-residue stretch at 4116–4228 (NNELSPVALR…GSLAATVRLQ (113 aa)) folds into the Nsp9 ssRNA-binding domain. The 139-residue stretch at 4229-4367 (AGNATEVPAN…CDQLREPMMQ (139 aa)) folds into the ExoN/MTase coactivator domain. Positions 4302, 4305, 4311, 4318, 4345, 4348, 4356, and 4358 each coordinate Zn(2+). Zinc fingers lie at residues 4302 to 4318 (CLYC…KGFC) and 4345 to 4358 (CTVC…GCSC). A NiRAN domain is found at 4374 to 4628 (FLNRVCGVSA…AAESHMDADL (255 aa)). Asparagine 4576 and aspartate 4585 together coordinate Mn(2+). Residues 4633–4731 (IKWDLLKYDF…HNQDVNLHSS (99 aa)) form the Nsp12 Interface domain. Positions 4662, 4668, 4673, 4677, and 4854 each coordinate Zn(2+). One can recognise a Nsp12 RNA-dependent RNA polymerase domain in the interval 4732–5299 (RLSFKELLVY…AMYTPHTVLQ (568 aa)). A rdRp Fingers N-ter region spans residues 4734–4948 (SFKELLVYAA…HQKLLKSIAA (215 aa)). The segment at 4949 to 4987 (TRGATVVIGTSKFYGGWHNMLKTVYSDVETPHLMGWDYP) is rdRp Palm N-ter. The RdRp catalytic domain maps to 4979 to 5141 (PHLMGWDYPK…CYNSNYAAQG (163 aa)). The interval 4988-5046 (KCDRAMPNMLRIMASLVLARKHSTCCNLSHRFYRLANECAQVLSEMVMCGGSLYVKPGG) is rdRp Fingers C-ter. The Zn(2+) site is built by histidine 5009, cysteine 5012, and cysteine 5013. The interval 5047–5182 (TSSGDATTAY…TKGPHEFCSQ (136 aa)) is rdRp Palm C-ter. Catalysis depends on residues serine 5126, aspartate 5127, and aspartate 5128. The interval 5183–5299 (HTMLVKQGDD…AMYTPHTVLQ (117 aa)) is rdRp Thumb. In terms of domain architecture, CV ZBD spans 5300 to 5412 (AVGACVLCNS…TDFNAIATCD (113 aa)). Residues cysteine 5304, cysteine 5307, cysteine 5315, cysteine 5318, cysteine 5325, cysteine 5328, histidine 5332, histidine 5338, cysteine 5349, cysteine 5354, cysteine 5371, and histidine 5374 each coordinate Zn(2+). In terms of domain architecture, (+)RNA virus helicase ATP-binding spans 5556–5737 (NISDEFSSNV…MKTIGPDMFL (182 aa)). 5581 to 5588 (GPPGTGKS) provides a ligand contact to ATP. Residues 5738–5907 (GTCRRCPAEI…TLQAENVTGL (170 aa)) enclose the (+)RNA virus helicase C-terminal domain. The ExoN domain maps to 5972–6187 (MFITREEAIR…RCLAVHECFV (216 aa)). Residues aspartate 5990, glutamate 5992, and glutamate 6091 contribute to the active site. Zn(2+) is bound by residues cysteine 6107, cysteine 6110, cysteine 6126, histidine 6129, histidine 6157, cysteine 6161, and histidine 6164. Residues histidine 6168 and aspartate 6173 contribute to the active site. Position 6179 (cysteine 6179) interacts with Zn(2+). The region spanning 6196-6427 (YPIIGDELKI…NLWNTFTRLQ (232 aa)) is the N7-MTase domain. Position 6231-6237 (6231-6237 (DIGNPKA)) interacts with S-adenosyl-L-methionine. Residues 6314-6328 (CDGGSLYVNKHAFHT) are gpppA-binding. Zn(2+) is bound by residues cysteine 6352, cysteine 6373, cysteine 6384, and histidine 6387. Residues 6428 to 6488 (SLENVAYNVV…NVAFELWAKR (61 aa)) enclose the Nsp15 N-terminal oligomerization domain. The 126-residue stretch at 6489–6614 (NIKSVPEIKI…YFKKVDGIIQ (126 aa)) folds into the AV-Nsp11N/CoV-Nsp15M domain. Residues 6631–6770 (KPRSQMETDF…KDGHVETFYP (140 aa)) form the NendoU domain. Catalysis depends on residues histidine 6661, histidine 6676, lysine 6716, lysine 6819, aspartate 6903, lysine 6943, and glutamate 6976. A Nidovirus-type SAM-dependent 2'-O-MTase domain is found at 6775–7069 (SQAWQPGVAM…RVVVSSDILV (295 aa)).

It belongs to the coronaviruses polyprotein 1ab family. In terms of assembly, interacts with host PHB and PHB2. Interacts with papain-like protease nsp3 and non-structural protein 6. As to quaternary structure, monomer. Homodimer. Only the homodimer shows catalytic activity. In terms of assembly, interacts with nsp8 and nsp12 to form the replication-transcription complex (RTC): nsp12, nsp7, two subunits of nsp8, and up to two subunits of nsp13. Interacts with nsp7, nsp13 and nsp12 to form the replication-transcription complex (RTC): nsp12, nsp7, two subunits of nsp8, and up to two subunits of nsp13. As to quaternary structure, interacts with nsp12. In terms of assembly, interacts with proofreading exoribonuclease nsp14 and 2'-O-methyltransferase nsp16; these interactions enhance nsp14 and nsp16 enzymatic activities. Interacts with nsp7 and nsp8 to form the replication-transcription complex (RTC): nsp12, nsp7, two subunits of nsp8, and up to two subunits of nsp13. Interacts with nsp9. As to quaternary structure, interacts with nsp8 to form the replication-transcription complex (RTC): nsp12, nsp7, two subunits of nsp8, and up to two subunits of nsp13. Requires Mn(2+) as cofactor. The cofactor is Mg(2+). In terms of processing, specific enzymatic cleavages in vivo by its own proteases yield mature proteins. 3CL-PRO and PL-PRO proteinases are autocatalytically processed.

The protein localises to the host membrane. It localises to the host cytoplasm. The protein resides in the host perinuclear region. It is found in the host endoplasmic reticulum-Golgi intermediate compartment. It catalyses the reaction RNA(n) + a ribonucleoside 5'-triphosphate = RNA(n+1) + diphosphate. The catalysed reaction is ATP + H2O = ADP + phosphate + H(+). It carries out the reaction Thiol-dependent hydrolysis of ester, thioester, amide, peptide and isopeptide bonds formed by the C-terminal Gly of ubiquitin (a 76-residue protein attached to proteins as an intracellular targeting signal).. The enzyme catalyses a 5'-end (N(7)-methyl 5'-triphosphoguanosine)-ribonucleoside in mRNA + S-adenosyl-L-methionine = a 5'-end (N(7)-methyl 5'-triphosphoguanosine)-(2'-O-methyl-ribonucleoside) in mRNA + S-adenosyl-L-homocysteine + H(+). It catalyses the reaction uridylyl-uridylyl-ribonucleotide-RNA = a 3'-end uridylyl-2',3'-cyclophospho-uridine-RNA + a 5'-end dephospho-ribonucleoside-RNA. The catalysed reaction is a 5'-end diphospho-ribonucleoside in mRNA + GTP + H(+) = a 5'-end (5'-triphosphoguanosine)-ribonucleoside in mRNA + diphosphate. It carries out the reaction a 5'-end (5'-triphosphoguanosine)-ribonucleoside in mRNA + S-adenosyl-L-methionine = a 5'-end (N(7)-methyl 5'-triphosphoguanosine)-ribonucleoside in mRNA + S-adenosyl-L-homocysteine. Functionally, the replicase polyprotein of coronaviruses is a multifunctional protein: it contains the activities necessary for the transcription of negative stranded RNA, leader RNA, subgenomic mRNAs and progeny virion RNA as well as proteinases responsible for the cleavage of the polyprotein into functional products. In terms of biological role, inhibits host translation by interacting with the 40S ribosomal subunit. The nsp1-40S ribosome complex further induces an endonucleolytic cleavage near the 5'UTR of host mRNAs, targeting them for degradation. Viral mRNAs are not susceptible to nsp1-mediated endonucleolytic RNA cleavage thanks to the presence of a 5'-end leader sequence and are therefore protected from degradation. By suppressing host gene expression, nsp1 facilitates efficient viral gene expression in infected cells and evasion from host immune response. May play a role in the modulation of host cell survival signaling pathway by interacting with host PHB and PHB2. Indeed, these two proteins play a role in maintaining the functional integrity of the mitochondria and protecting cells from various stresses. Its function is as follows. Responsible for the cleavages located at the N-terminus of the replicase polyprotein. In addition, PL-PRO possesses a deubiquitinating/deISGylating activity and processes both 'Lys-48'- and 'Lys-63'-linked polyubiquitin chains from cellular substrates. Participates together with nsp4 in the assembly of virally-induced cytoplasmic double-membrane vesicles necessary for viral replication. Antagonizes innate immune induction of type I interferon by blocking the phosphorylation, dimerization and subsequent nuclear translocation of host IRF3. Also prevents host NF-kappa-B signaling. Functionally, participates in the assembly of virally-induced cytoplasmic double-membrane vesicles necessary for viral replication. In terms of biological role, cleaves the C-terminus of replicase polyprotein at 11 sites. Recognizes substrates containing the core sequence [ILMVF]-Q-|-[SGACN]. Also able to bind an ADP-ribose-1''-phosphate (ADRP). Plays a role in the initial induction of autophagosomes from host endoplasmic reticulum. Later, limits the expansion of these phagosomes that are no longer able to deliver viral components to lysosomes. Its function is as follows. Forms a hexadecamer with nsp8 (8 subunits of each) that may participate in viral replication by acting as a primase. Alternatively, may synthesize substantially longer products than oligonucleotide primers. Functionally, forms a hexadecamer with nsp7 (8 subunits of each) that may participate in viral replication by acting as a primase. Alternatively, may synthesize substantially longer products than oligonucleotide primers. In terms of biological role, forms a primer, NSP9-pU, which is utilized by the polymerase for the initiation of RNA chains. Interacts with ribosome signal recognition particle RNA (SRP). Together with NSP8, suppress protein integration into the cell membrane, thereby disrupting host immune defenses. Plays a pivotal role in viral transcription by stimulating both nsp14 3'-5' exoribonuclease and nsp16 2'-O-methyltransferase activities. Therefore plays an essential role in viral mRNAs cap methylation. Its function is as follows. RNA-directed RNA polymerase that catalyzes the transcription of viral genomic and subgenomic RNAs. Acts in complex with nsp7 and nsp8 to transcribe both the minus and positive strands of genomic RNA. The kinase-like NiRAN domain of NSP12 attaches one or more nucleotides to the amino terminus of NSP9, forming a covalent RNA-protein intermediate that serves as transcription/replication primer. Subgenomic RNAs (sgRNAs) are formed by discontinuous transcription: The polymerase has the ability to pause at transcription-regulating sequences (TRS) and jump to the leader TRS, resulting in a major deletion. This creates a series of subgenomic RNAs that are replicated, transcribed and translated. In addition, Nsp12 is a subunit of the viral RNA capping enzyme that catalyzes the RNA guanylyltransferase reaction for genomic and sub-genomic RNAs. Subsequently, the NiRAN domain transfers RNA to GDP, and forms the core cap structure GpppA-RNA. Functionally, multi-functional protein with a zinc-binding domain in N-terminus displaying RNA and DNA duplex-unwinding activities with 5' to 3' polarity. Activity of helicase is dependent on magnesium. In terms of biological role, plays a role in viral RNA synthesis through two distinct activities. The N7-guanine methyltransferase activity plays a role in the formation of the cap structure GpppA-RNA. The proofreading exoribonuclease reduces the sensitivity of the virus to RNA mutagens during replication. This activity acts on both ssRNA and dsRNA in a 3'-5' direction. Plays a role in viral transcription/replication and prevents the simultaneous activation of host cell dsRNA sensors, such as MDA5/IFIH1, OAS, and PKR. Acts by degrading the 5'-polyuridines generated during replication of the poly(A) region of viral genomic and subgenomic RNAs. Catalyzes a two-step reaction in which a 2'3'-cyclic phosphate (2'3'-cP) is first generated by 2'-O transesterification, which is then hydrolyzed to a 3'-phosphate (3'-P). If not degraded, poly(U) RNA would hybridize with poly(A) RNA tails and activate host dsRNA sensors. Its function is as follows. Methyltransferase that mediates mRNA cap 2'-O-ribose methylation to the 5'-cap structure of viral mRNAs. N7-methyl guanosine cap is a prerequisite for binding of nsp16. Therefore plays an essential role in viral mRNAs cap methylation which is essential to evade immune system. The polypeptide is Replicase polyprotein 1ab (rep) (Rhinolophus ferrumequinum (Greater horseshoe bat)).